Reading from the N-terminus, the 743-residue chain is Probable TonB-dependent receptor BfrD (743 aa).

The signal sequence occupies residues 1–30 (MKFYSSHPMPESLAAAIAVPLLGLLPAAQA). A TBDR plug domain is found at 62 to 168 (PLADTPRTVQ…AGGSINLVTK (107 aa)). The 571-residue stretch at 173-743 (QDFTEVQAGI…SAMLTFKLSY (571 aa)) folds into the TBDR beta-barrel domain. Residues 726–743 (YAALGPGRSAMLTFKLSY) carry the TonB C-terminal box motif.

This sequence belongs to the TonB-dependent receptor family.

It is found in the cell outer membrane. In terms of biological role, probably involved in iron transport. The chain is Probable TonB-dependent receptor BfrD (bfrD) from Bordetella pertussis (strain Tohama I / ATCC BAA-589 / NCTC 13251).